The sequence spans 811 residues: Glycerol-3-phosphate acyltransferase (811 aa).

Positions 303-308 (CHRSHM) match the HXXXXD motif motif.

This sequence belongs to the GPAT/DAPAT family.

The protein localises to the cell inner membrane. The enzyme catalyses sn-glycerol 3-phosphate + an acyl-CoA = a 1-acyl-sn-glycero-3-phosphate + CoA. Its pathway is phospholipid metabolism; CDP-diacylglycerol biosynthesis; CDP-diacylglycerol from sn-glycerol 3-phosphate: step 1/3. This Glaesserella parasuis serovar 5 (strain SH0165) (Haemophilus parasuis) protein is Glycerol-3-phosphate acyltransferase.